Consider the following 92-residue polypeptide: Neurophysin 2 (92 aa).

7 disulfides stabilise this stretch: Cys-7-Cys-51, Cys-10-Cys-24, Cys-18-Cys-41, Cys-25-Cys-31, Cys-58-Cys-70, Cys-64-Cys-82, and Cys-71-Cys-76.

This sequence belongs to the vasopressin/oxytocin family.

It is found in the secreted. Its function is as follows. Neurophysin 2 specifically binds the midbrain peptide hormone vasopressin. This Equus caballus (Horse) protein is Neurophysin 2 (AVP).